We begin with the raw amino-acid sequence, 124 residues long: Meiotically up-regulated gene 103 protein (124 aa).

The protein resides in the nucleus. It localises to the nucleolus. Its function is as follows. Has a role in meiosis. The chain is Meiotically up-regulated gene 103 protein (mug103) from Schizosaccharomyces pombe (strain 972 / ATCC 24843) (Fission yeast).